Reading from the N-terminus, the 150-residue chain is 6,7-dimethyl-8-ribityllumazine synthase (150 aa).

5-amino-6-(D-ribitylamino)uracil-binding positions include Phe11, 43–45 (VFD), and 67–69 (AVI). (2S)-2-hydroxy-3-oxobutyl phosphate is bound at residue 72–73 (AT). Residue His75 is the Proton donor of the active site. Leu100 serves as a coordination point for 5-amino-6-(D-ribitylamino)uracil. Arg115 is a binding site for (2S)-2-hydroxy-3-oxobutyl phosphate.

Belongs to the DMRL synthase family.

The enzyme catalyses (2S)-2-hydroxy-3-oxobutyl phosphate + 5-amino-6-(D-ribitylamino)uracil = 6,7-dimethyl-8-(1-D-ribityl)lumazine + phosphate + 2 H2O + H(+). It participates in cofactor biosynthesis; riboflavin biosynthesis; riboflavin from 2-hydroxy-3-oxobutyl phosphate and 5-amino-6-(D-ribitylamino)uracil: step 1/2. In terms of biological role, catalyzes the formation of 6,7-dimethyl-8-ribityllumazine by condensation of 5-amino-6-(D-ribitylamino)uracil with 3,4-dihydroxy-2-butanone 4-phosphate. This is the penultimate step in the biosynthesis of riboflavin. The chain is 6,7-dimethyl-8-ribityllumazine synthase from Pyrobaculum calidifontis (strain DSM 21063 / JCM 11548 / VA1).